The primary structure comprises 336 residues: Nucleoid-associated protein ECA2747 (336 aa).

Residues Lys-317–Gln-336 are disordered.

Belongs to the YejK family.

It is found in the cytoplasm. The protein localises to the nucleoid. This is Nucleoid-associated protein ECA2747 from Pectobacterium atrosepticum (strain SCRI 1043 / ATCC BAA-672) (Erwinia carotovora subsp. atroseptica).